A 211-amino-acid polypeptide reads, in one-letter code: NADH-quinone oxidoreductase subunit C (211 aa).

This sequence belongs to the complex I 30 kDa subunit family. In terms of assembly, NDH-1 is composed of 14 different subunits. Subunits NuoB, C, D, E, F, and G constitute the peripheral sector of the complex.

It is found in the cell inner membrane. It catalyses the reaction a quinone + NADH + 5 H(+)(in) = a quinol + NAD(+) + 4 H(+)(out). In terms of biological role, NDH-1 shuttles electrons from NADH, via FMN and iron-sulfur (Fe-S) centers, to quinones in the respiratory chain. The immediate electron acceptor for the enzyme in this species is believed to be ubiquinone. Couples the redox reaction to proton translocation (for every two electrons transferred, four hydrogen ions are translocated across the cytoplasmic membrane), and thus conserves the redox energy in a proton gradient. The polypeptide is NADH-quinone oxidoreductase subunit C (Azorhizobium caulinodans (strain ATCC 43989 / DSM 5975 / JCM 20966 / LMG 6465 / NBRC 14845 / NCIMB 13405 / ORS 571)).